Here is a 439-residue protein sequence, read N- to C-terminus: 5-methylthioadenosine/S-adenosylhomocysteine deaminase (439 aa).

Residues His-70 and His-72 each coordinate Zn(2+). Substrate is bound by residues Glu-99 and His-192. Position 219 (His-219) interacts with Zn(2+). Substrate-binding residues include Glu-222 and Asp-307. Residue Asp-307 participates in Zn(2+) binding.

The protein belongs to the metallo-dependent hydrolases superfamily. MTA/SAH deaminase family. The cofactor is Zn(2+).

It catalyses the reaction S-adenosyl-L-homocysteine + H2O + H(+) = S-inosyl-L-homocysteine + NH4(+). It carries out the reaction S-methyl-5'-thioadenosine + H2O + H(+) = S-methyl-5'-thioinosine + NH4(+). Catalyzes the deamination of 5-methylthioadenosine and S-adenosyl-L-homocysteine into 5-methylthioinosine and S-inosyl-L-homocysteine, respectively. Is also able to deaminate adenosine. The sequence is that of 5-methylthioadenosine/S-adenosylhomocysteine deaminase from Thermodesulfovibrio yellowstonii (strain ATCC 51303 / DSM 11347 / YP87).